The primary structure comprises 346 residues: Phosphate acyltransferase (346 aa).

It belongs to the PlsX family. As to quaternary structure, homodimer. Probably interacts with PlsY.

It is found in the cytoplasm. It catalyses the reaction a fatty acyl-[ACP] + phosphate = an acyl phosphate + holo-[ACP]. It participates in lipid metabolism; phospholipid metabolism. In terms of biological role, catalyzes the reversible formation of acyl-phosphate (acyl-PO(4)) from acyl-[acyl-carrier-protein] (acyl-ACP). This enzyme utilizes acyl-ACP as fatty acyl donor, but not acyl-CoA. The sequence is that of Phosphate acyltransferase from Delftia acidovorans (strain DSM 14801 / SPH-1).